We begin with the raw amino-acid sequence, 165 residues long: Crossover junction endodeoxyribonuclease RuvC (165 aa).

Residues Asp-7, Glu-67, and Asp-140 contribute to the active site. Asp-7, Glu-67, and Asp-140 together coordinate Mg(2+).

Belongs to the RuvC family. As to quaternary structure, homodimer which binds Holliday junction (HJ) DNA. The HJ becomes 2-fold symmetrical on binding to RuvC with unstacked arms; it has a different conformation from HJ DNA in complex with RuvA. In the full resolvosome a probable DNA-RuvA(4)-RuvB(12)-RuvC(2) complex forms which resolves the HJ. Mg(2+) serves as cofactor.

It localises to the cytoplasm. The enzyme catalyses Endonucleolytic cleavage at a junction such as a reciprocal single-stranded crossover between two homologous DNA duplexes (Holliday junction).. Functionally, the RuvA-RuvB-RuvC complex processes Holliday junction (HJ) DNA during genetic recombination and DNA repair. Endonuclease that resolves HJ intermediates. Cleaves cruciform DNA by making single-stranded nicks across the HJ at symmetrical positions within the homologous arms, yielding a 5'-phosphate and a 3'-hydroxyl group; requires a central core of homology in the junction. The consensus cleavage sequence is 5'-(A/T)TT(C/G)-3'. Cleavage occurs on the 3'-side of the TT dinucleotide at the point of strand exchange. HJ branch migration catalyzed by RuvA-RuvB allows RuvC to scan DNA until it finds its consensus sequence, where it cleaves and resolves the cruciform DNA. The protein is Crossover junction endodeoxyribonuclease RuvC of Desulfitobacterium hafniense (strain DSM 10664 / DCB-2).